The chain runs to 196 residues: Flagellar transcriptional regulator FlhC (196 aa).

Zn(2+) is bound by residues C138, C141, C158, and C161.

Belongs to the FlhC family. As to quaternary structure, heterohexamer composed of two FlhC and four FlhD subunits. Each FlhC binds a FlhD dimer, forming a heterotrimer, and a hexamer assembles by dimerization of two heterotrimers. Zn(2+) is required as a cofactor.

Its subcellular location is the cytoplasm. Functions in complex with FlhD as a master transcriptional regulator that regulates transcription of several flagellar and non-flagellar operons by binding to their promoter region. Activates expression of class 2 flagellar genes, including fliA, which is a flagellum-specific sigma factor that turns on the class 3 genes. Also regulates genes whose products function in a variety of physiological pathways. The polypeptide is Flagellar transcriptional regulator FlhC (Sodalis glossinidius (strain morsitans)).